The sequence spans 114 residues: Large ribosomal subunit protein bL19 (114 aa).

It belongs to the bacterial ribosomal protein bL19 family.

This protein is located at the 30S-50S ribosomal subunit interface and may play a role in the structure and function of the aminoacyl-tRNA binding site. The sequence is that of Large ribosomal subunit protein bL19 from Clostridium botulinum (strain Loch Maree / Type A3).